We begin with the raw amino-acid sequence, 2260 residues long: MKRHQFKSWIFELREIWREIKNSHYFLDSWIKFDSVGFFTHIFFHQERFMKLFDPRIGSILLSRDSQGSTSNRYFTIKGVVLLVVAVLISRINNRKMVERKNLYLMGLLPIPMNSIGPRNETLEESFWSSNINRLIVSLLYLPKRKKISESCFMDPQERTWVLPINKKCIMPESNRGSRWWRNRIGKRRDSSCKISNETVAGIEISFKEKDSKYLEFLFLSYTDNPIHKDHDWELFDRLSPRKKRNIINLNSGQLFEILGKDLICYLMSAFREKRPIEGEGFFKQQGAEATIQSNDIEHVSHLFSRNKWGISLQNCAQFHMWQFRQDLFVSWGKNQHESDFLRNVSRENLIWLDNVWLVNKDRFFSKVRNVLSNIQYDSTRSIFVQVTDSSQWKGFSDQSRDHFDSIRNVDSEYHTLIDQTEIQQLKERSILWDPSFLQTERTEIESDRFPKCLFGSSSMSRLFTEREKQMNNHLLPEEIEEFLGNPTRSIRSLFSDRWSELHLGSNPTERSTRDQKFWKKKQDVSFVLSRRSENKEMVDIFKIITYLQNTVSIHPISSDPGCDMVPKDEPDMDSSNKISFLNKNPFSEEGFQEMADLFTLSITEPDLVYHRGFAFSIDSYGLDEKKFLNEVFNSRDESKKKSLLVLPPLFYEENESFYRRIRKKSVRIYCGNDLEDPKLKTAVFASNNIMEAVNQYRLIRDLIQVQYRTYGYIRNVSNRFFLMNRSDRNFEYGIQRDQIGNDTLNHITIMKYMINQHLSNLKKSKWFDSLISRTERSMNRDPDAYRYKWSNGSKNFQKHLEHFISEQKNRFQVVFDRLRINQYSIDWSEAIDKQDLSKSLRFFLSKSLLFLSKSLPFLSKSLPFFFVSIGDIPIHRSEIHIYELKGPNDQLCNQLLESIGVQIVHLNKLKPFLLDDHDTSQRPKFLINGGTILPFLFKKIQKWMIDSFHTRKNRRKSFDNTDFYFSMISHDRDDWLNTVKPFHRSSLISSFYKANRLRFLNDPHHFWFYCNKRFPFYVEKTRINNYDLTYGQFLNILFIRNKIFSLCVGKKKHILLERETISPIESQVSDIFIPNDFPQSGDETYKLYKSFHFPIRSDPFVRRAIYSIADISATPLTEEQIANFERTYCQPLSDMNLFDSEGKNLHQYLSFNSNMGLIHTPCSEKYLPSGKRKKQSLCLKKCVEKRRMYRTFQRDSAFSNLSKWNLFQTYMPWLLTSTGCKYLNFTLLDTFSDPLPIPSSSQKFVSIFNDIMHGSAWPIPQKKLWAILPQWTLISEISSKCLQNLLLLSEEMIHRNNESPVLLIWTHLRSTNAREFLYSILFLLLVAGYLVRIHLLFVFRASSELQTGLEKIKSLMIPSYMIELRKLLYRYPTSELNSFWLKNLLLVALEQLGDSLEEIRGSASGGNMLLGGGPAYGIKSIRSKKKYLNINLIDLISIIPNPINRITFSRNTRHLSRTSKEIYSLIRKRKNVNGDWIDDKIESWVANSDSIDDEEREFLIQFSTLTTEKRIDQILLSLTHSDHLSKNDSGYQMIEQPGSIYLRYLVDIHKKYLMNYEFNRSCLAERRIFLAHYQTITYSQTSCGANSFHFPSHGKPFSLRLALSPSRGILVIGSIGTGRSYLVKYLATNSYVPFITVFPNKFLDDKPKGYLIDDIDIDESDDIDDDLDTELLTMTNVLTMYMTPKIDQFDITLQFELAKAMSPCIIWIPNIHDLYVNESNYLSIGLLENYLSRDCERCSTRNILVIASTHIPQKVDPALIAPNKLNTCIKIRRLLIPQRRKHFFILSYTRGFRLEKKMFHTNGFESITMGSNARDLVALINEALSSSITQKKSIIETNTIRSALHRQTWDLRSQVRSVQDHGILFYQIGRAVAQNVLLSNCPIDPISIYMKKKSRKEGDSYLYEWYFELGTSMKKLTILLYLLSCSAGSVAQDLWSSPSPGPDEKNGITSYGFVENDSDLVHGLLEVEGALVGSSRTEKDCSQFDNNRVTLLEPKNQLDMMQNGSCSIVDQRFQYEKYESEFEEGEGEGALDPQQIEEDLFNHIVWAPRIWRPCGNLFNCIERPTELGFPYWAGSFRGKQIIYHKEDELQENDSEFLQSGTMQYQTRDRSSKEQGFFRISQFIWDPADPFFFLFKDQPFVSVFSRREFFADEEMSKGLITSQTNPPTSIYKRWFIKNTQEKHFELLIHRQRWLRTNSSLSNGSFRSNTLSESYQYLSNLFLSNGTLLDQMTKTLLRKRWLFPDEMKHLIHVTGERFPIP.

1614 to 1621 (GSIGTGRS) lines the ATP pocket.

This sequence belongs to the Ycf2 family.

Its subcellular location is the plastid. The protein localises to the chloroplast stroma. Its function is as follows. Probable ATPase of unknown function. Its presence in a non-photosynthetic plant (Epifagus virginiana) and experiments in tobacco indicate that it has an essential function which is probably not related to photosynthesis. The protein is Protein Ycf2 of Dioscorea elephantipes (Elephant's foot yam).